The following is a 167-amino-acid chain: Lipoprotein signal peptidase (167 aa).

2 consecutive transmembrane segments (helical) span residues 56 to 76 (FAPP…VLVF) and 84 to 104 (TPIF…NMID). Active-site residues include Asp-113 and Asp-139. Residues 132–152 (WPIFNVADSAITIGACMLVLF) form a helical membrane-spanning segment.

Belongs to the peptidase A8 family.

The protein resides in the cell inner membrane. The catalysed reaction is Release of signal peptides from bacterial membrane prolipoproteins. Hydrolyzes -Xaa-Yaa-Zaa-|-(S,diacylglyceryl)Cys-, in which Xaa is hydrophobic (preferably Leu), and Yaa (Ala or Ser) and Zaa (Gly or Ala) have small, neutral side chains.. It participates in protein modification; lipoprotein biosynthesis (signal peptide cleavage). Its function is as follows. This protein specifically catalyzes the removal of signal peptides from prolipoproteins. The polypeptide is Lipoprotein signal peptidase (Chlorobium luteolum (strain DSM 273 / BCRC 81028 / 2530) (Pelodictyon luteolum)).